Reading from the N-terminus, the 127-residue chain is Unclassified hydrophobin 5 (127 aa).

A signal peptide spans 1–24 (MFNKQTNAIVLLFTFALFATLAVA). Cystine bridges form between C39–C107, C46–C101, C47–C92, and C108–C121.

This sequence belongs to the fungal hydrophobin family. As to quaternary structure, self-assembles to form functional amyloid fibrils called rodlets. Self-assembly into fibrillar rodlets occurs spontaneously at hydrophobic:hydrophilic interfaces and the rodlets further associate laterally to form amphipathic monolayers.

It is found in the secreted. The protein resides in the cell wall. Its function is as follows. Aerial growth, conidiation, and dispersal of filamentous fungi in the environment rely upon a capability of their secreting small amphipathic proteins called hydrophobins (HPBs) with low sequence identity. Class I can self-assemble into an outermost layer of rodlet bundles on aerial cell surfaces, conferring cellular hydrophobicity that supports fungal growth, development and dispersal; whereas Class II form highly ordered films at water-air interfaces through intermolecular interactions but contribute nothing to the rodlet structure. This is Unclassified hydrophobin 5 from Pleurotus ostreatus (strain PC15) (Oyster mushroom).